The primary structure comprises 212 residues: Pyrrolidone-carboxylate peptidase (212 aa).

Catalysis depends on residues glutamate 80, cysteine 143, and histidine 165.

It belongs to the peptidase C15 family. As to quaternary structure, homotetramer.

It localises to the cytoplasm. The enzyme catalyses Release of an N-terminal pyroglutamyl group from a polypeptide, the second amino acid generally not being Pro.. Functionally, removes 5-oxoproline from various penultimate amino acid residues except L-proline. This is Pyrrolidone-carboxylate peptidase from Vibrio campbellii (strain ATCC BAA-1116).